The chain runs to 199 residues: 3-isopropylmalate dehydratase small subunit (199 aa).

Belongs to the LeuD family. LeuD type 1 subfamily. Heterodimer of LeuC and LeuD.

The catalysed reaction is (2R,3S)-3-isopropylmalate = (2S)-2-isopropylmalate. The protein operates within amino-acid biosynthesis; L-leucine biosynthesis; L-leucine from 3-methyl-2-oxobutanoate: step 2/4. Functionally, catalyzes the isomerization between 2-isopropylmalate and 3-isopropylmalate, via the formation of 2-isopropylmaleate. This is 3-isopropylmalate dehydratase small subunit from Kocuria rhizophila (strain ATCC 9341 / DSM 348 / NBRC 103217 / DC2201).